The sequence spans 534 residues: Calmodulin calcium-dependent NAD kinase (534 aa).

Residues 167 to 196 (QKVPKLKDFVMAATRKQRFERVTKDLKVKR) form a calmodulin-binding region. ATP is bound at residue 238 to 245 (GGMGAGKS).

As to quaternary structure, interacts with calmodulin (CaM) in a calcium Ca(2+)-dependent manner in vitro. Ca(2+) serves as cofactor.

The protein resides in the mitochondrion outer membrane. The catalysed reaction is NAD(+) + ATP = ADP + NADP(+) + H(+). Phosphorylates NAD(+) to produce NADP(+) in a calmodulin calcium-dependent manner. Does not possess activity toward NADH. Has broad specificity for the phosphoryl donor, as ATP, CTP, GTP and UTP can be used interchangeably and produce similar efficiencies. May play a role in producing NADP(H) needed to regulate the elicitor-induced reactive oxygen species (ROS) burst by sustaining the activity of NADPH oxidases. Does not seem to play a role in photosynthesis-driven growth. The polypeptide is Calmodulin calcium-dependent NAD kinase (Arabidopsis thaliana (Mouse-ear cress)).